The following is a 364-amino-acid chain: 2-oxoadipate dioxygenase/decarboxylase, chloroplastic/amyloplastic (364 aa).

A chloroplast-targeting transit peptide spans 1 to 49; it reads MAVALAGARSPGAGAILSLRRLAPAAAAPVRLGGSGTPGTRRRRGIAMA. Positions 107 and 111 each coordinate 2-oxoadipate. Fe(2+) is bound at residue His-107. His-243 provides a ligand contact to Fe(2+). Gln-289 and Tyr-313 together coordinate 2-oxoadipate. Fe(2+) is bound at residue Glu-315.

It belongs to the 2-oxoadipate dioxygenase/decarboxylase family. Fe(2+) is required as a cofactor. As to expression, expressed in roots, stems, leaf sheaths, leaf blades, panicles, and endosperm.

It localises to the plastid. It is found in the chloroplast. The protein resides in the amyloplast. It carries out the reaction 2-oxoadipate + O2 = (R)-2-hydroxyglutarate + CO2. Its pathway is amino-acid degradation. Functionally, catalyzes the decarboxylation and hydroxylation of 2-oxoadipate (2OA) to form D-2-hydroxyglutarate (D-2-HGA). Is involved in a D-lysine catabolic pathway. Involved in the regulation of starch synthesis and amyloplast development within the peripheral endosperm during the grain-filling stage. The protein is 2-oxoadipate dioxygenase/decarboxylase, chloroplastic/amyloplastic of Oryza sativa subsp. japonica (Rice).